We begin with the raw amino-acid sequence, 466 residues long: Adenosylhomocysteinase (466 aa).

Threonine 57, aspartate 132, and glutamate 192 together coordinate substrate. Position 193–195 (193–195 (TTT)) interacts with NAD(+). Residues lysine 222 and aspartate 226 each coordinate substrate. NAD(+)-binding positions include asparagine 227, 256-261 (GYGDVG), glutamate 279, asparagine 314, 335-337 (IGH), and asparagine 380.

Belongs to the adenosylhomocysteinase family. Requires NAD(+) as cofactor.

It is found in the cytoplasm. It carries out the reaction S-adenosyl-L-homocysteine + H2O = L-homocysteine + adenosine. Its pathway is amino-acid biosynthesis; L-homocysteine biosynthesis; L-homocysteine from S-adenosyl-L-homocysteine: step 1/1. Its function is as follows. May play a key role in the regulation of the intracellular concentration of adenosylhomocysteine. This is Adenosylhomocysteinase from Brucella melitensis biotype 2 (strain ATCC 23457).